The following is a 608-amino-acid chain: Formate hydrogenlyase subunit 3 (608 aa).

12 consecutive transmembrane segments (helical) span residues 10–26 (GVAWFVAAAVLAFLFSF), 44–67 (LYTAAAGFTVLTGAVGVSGALSLV), 76–93 (LNAIWLITLGLCGLFVSL), 116–140 (AAAVCAVIASNLGMFVVMAEIMALC), 153–173 (LWFALGRLGTLLLAIACWLLW), 197–218 (IWLLGVIGFGLLAGIIPLHGWV), 229–251 (AAALFSTVVMKIGLLGILTLSLL), 258–280 (WWGIALLVLGMITAFVGGLYALV), 296–312 (IGIILLGLGAGVTGIAL), 416–440 (LAVGLAITGALAVMCMAKVYGVTFL), 453–476 (CAPLLMSVSVVALAICCVIGGVAA), and 502–521 (MITLLLIACPLLPFIIMAIC).

This sequence belongs to the complex I subunit 4 family. As to quaternary structure, FHL comprises of a formate dehydrogenase, unidentified electron carriers and a hydrogenase (isoenzyme 3). In this non-energy conserving pathway molecular hydrogen and carbodioxide from formate are released.

The protein resides in the cell inner membrane. The sequence is that of Formate hydrogenlyase subunit 3 (hycC) from Escherichia coli (strain K12).